A 204-amino-acid polypeptide reads, in one-letter code: MALVIGLTGGIASGKTTVANLFKQQFKIDIVDADIVAREVVEPGTPGLNAIIQHFGQDITHDDNTLDRAKLREKIFSNPEEKAWLNALLHPIIREKMIEDLQQVTSDYALLVVPLLVENNLDSLCDRVLVVDVEPETQISRTVKRDNVSEEQAHAILASQASRQQRLDIADDVVKNNPNDPDLLLQITDLHEKYLAMCKKNLRK.

A DPCK domain is found at 4–201 (VIGLTGGIAS…EKYLAMCKKN (198 aa)). 12–17 (ASGKTT) contributes to the ATP binding site.

This sequence belongs to the CoaE family.

It is found in the cytoplasm. The catalysed reaction is 3'-dephospho-CoA + ATP = ADP + CoA + H(+). The protein operates within cofactor biosynthesis; coenzyme A biosynthesis; CoA from (R)-pantothenate: step 5/5. Its function is as follows. Catalyzes the phosphorylation of the 3'-hydroxyl group of dephosphocoenzyme A to form coenzyme A. In Vibrio parahaemolyticus serotype O3:K6 (strain RIMD 2210633), this protein is Dephospho-CoA kinase.